We begin with the raw amino-acid sequence, 338 residues long: Acyl-CoA:acyl-CoA alkyltransferase (338 aa).

Mn(2+)-binding residues include histidine 18 and aspartate 56. Glutamate 97 functions as the Proton acceptor in the catalytic mechanism. Cysteine 123 (acyl-thioester intermediate) is an active-site residue.

The protein belongs to the thiolase-like superfamily. OleA family. Homodimer. Weakly associates with the OleBCD complex.

The protein resides in the cytoplasm. The enzyme catalyses a 1,2-saturated acyl-CoA + an acyl-CoA + H2O = an (R)-2-alkyl-3-oxoalkanoate + 2 CoA + H(+). Its activity is regulated as follows. Inhibited by cerulenin. Involved in olefin biosynthesis. Catalyzes a non-decarboxylative head-to-head Claisen condensation of two acyl-CoA molecules, generating an (R)-2-alkyl-3-oxoalkanoate. Is active with fatty acyl-CoA substrates that ranged from C(8) to C(16) in length, and is the most active with palmitoyl-CoA and myristoyl-CoA. In Xanthomonas campestris pv. campestris (strain ATCC 33913 / DSM 3586 / NCPPB 528 / LMG 568 / P 25), this protein is Acyl-CoA:acyl-CoA alkyltransferase.